Reading from the N-terminus, the 310-residue chain is tRNA uridine(34) hydroxylase (310 aa).

In terms of domain architecture, Rhodanese spans 124-218 (SDPEVLLIDT…YFEEVPQEES (95 aa)). The active-site Cysteine persulfide intermediate is Cys178.

The protein belongs to the TrhO family.

The enzyme catalyses uridine(34) in tRNA + AH2 + O2 = 5-hydroxyuridine(34) in tRNA + A + H2O. In terms of biological role, catalyzes oxygen-dependent 5-hydroxyuridine (ho5U) modification at position 34 in tRNAs. This is tRNA uridine(34) hydroxylase from Pseudomonas putida (strain GB-1).